Here is a 332-residue protein sequence, read N- to C-terminus: Long form salivary protein D7L1 (332 aa).

An N-terminal signal peptide occupies residues 1-21; that stretch reads MHSPKSFLLLAVVFVALRVTA. 2 cysteine pairs are disulfide-bonded: C40-C77 and C73-C133. A leukotriene E4-binding site is contributed by W61. K176 lines the leukotriene E4 pocket. Disulfide bonds link C184/C219, C200/C331, and C259/C278. 2 residues coordinate noradrenaline: E185 and R203. 2 residues coordinate noradrenaline: D294 and E297.

The protein belongs to the PBP/GOBP family. In terms of tissue distribution, female mosquito salivary gland (at protein level).

It localises to the secreted. Modulates blood feeding of female mosquitoes on vertebrate species by binding and sequestering different mediators involved in the host response, such as biogenic amines and eicosanoids. Binds dopamine, serotonin, histamine, tryptamine, adrenaline, noradrenaline, leukotriene B4, leukotriene C4, leukotriene D4, leukotriene E4 and U-46619, a stable analog of thromboxane A2. Inhibits platelet aggregation induced by serotonin and low doses of thromboxane A2 analog U-46619 but not by high doses of U-46619, collagen or ADP. Prevents leukocyte recruitment. This is Long form salivary protein D7L1 from Aedes albopictus (Asian tiger mosquito).